The chain runs to 190 residues: 3-isopropylmalate dehydratase small subunit (190 aa).

Belongs to the LeuD family. LeuD type 1 subfamily. In terms of assembly, heterodimer of LeuC and LeuD.

It catalyses the reaction (2R,3S)-3-isopropylmalate = (2S)-2-isopropylmalate. Its pathway is amino-acid biosynthesis; L-leucine biosynthesis; L-leucine from 3-methyl-2-oxobutanoate: step 2/4. Functionally, catalyzes the isomerization between 2-isopropylmalate and 3-isopropylmalate, via the formation of 2-isopropylmaleate. The sequence is that of 3-isopropylmalate dehydratase small subunit from Staphylococcus aureus (strain USA300).